Reading from the N-terminus, the 344-residue chain is Galactinol synthase 1 (344 aa).

Residue Lys111 is part of the active site. Residues Asp127, Asp129, and His265 each coordinate Mn(2+).

This sequence belongs to the glycosyltransferase 8 family. Galactosyltransferase subfamily. The cofactor is a divalent metal cation. In terms of tissue distribution, accumulates in mature seeds. Expressed in seedlings (axes and cotyledons), meristems, vascular tissues and emerging lateral roots. Present in abscission zones.

Its subcellular location is the cytoplasm. The enzyme catalyses myo-inositol + UDP-alpha-D-galactose = alpha-D-galactosyl-(1-&gt;3)-1D-myo-inositol + UDP + H(+). Its function is as follows. Galactinol synthase involved in the biosynthesis of raffinose family oligosaccharides (RFOs) that function as osmoprotectants. Promotes plant stress tolerance such as heat, chilling, salinity and methylviologen (MV), a superoxide radical generating drug, by mediating raffinose accumulation, an osmoprotective substance. The chain is Galactinol synthase 1 (GOLS1) from Arabidopsis thaliana (Mouse-ear cress).